We begin with the raw amino-acid sequence, 429 residues long: Forkhead box protein A1-A (429 aa).

The fork-head DNA-binding region spans 159 to 253; that stretch reads KPPYSYISLI…ENGCYLRRQK (95 aa). Residues 258–274 show a composition bias toward basic and acidic residues; the sequence is EKTQGGKGNQDGRKDHS. The disordered stretch occupies residues 258–341; that stretch reads EKTQGGKGNQ…HSTHSLAHES (84 aa). Residues 287–304 are compositionally biased toward low complexity; that stretch reads SSQMDSSSSMSNPSSSPQ. Positions 325–336 are enriched in polar residues; the sequence is PLSSHQNHSTHS.

At neurula stage, expressed in the notochord but not in the neural floor plate. During tailbud stages, expressed in the neural floor plate. At stage 35, expressed in the rhombencephalon, mesencephalon, pharyngeal pouches, foregut and pronephros. At stage 44, expressed in a region of the gut on the right hand side of the embryo. Expressed in the adult lung and liver.

It localises to the nucleus. In terms of biological role, probable transcription factor. In Xenopus laevis (African clawed frog), this protein is Forkhead box protein A1-A (foxa1-a).